A 334-amino-acid chain; its full sequence is Mevalonate kinase (334 aa).

110 to 120 provides a ligand contact to ATP; that stretch reads PVGAGLGSSAA. The active-site Proton acceptor is the Asp-161.

The protein belongs to the GHMP kinase family. Mevalonate kinase subfamily. Homodimer. It depends on Mg(2+) as a cofactor.

The protein localises to the cytoplasm. It catalyses the reaction (R)-mevalonate + ATP = (R)-5-phosphomevalonate + ADP + H(+). It functions in the pathway isoprenoid biosynthesis; isopentenyl diphosphate biosynthesis via mevalonate pathway; isopentenyl diphosphate from (R)-mevalonate: step 1/3. Catalyzes the phosphorylation of (R)-mevalonate (MVA) to (R)-mevalonate 5-phosphate (MVAP). Functions in the mevalonate (MVA) pathway leading to isopentenyl diphosphate (IPP), a key precursor for the biosynthesis of isoprenoid compounds such as archaeal membrane lipids. The protein is Mevalonate kinase of Thermococcus onnurineus (strain NA1).